Consider the following 482-residue polypeptide: MASLSLVLRYVVFLSFFILQKPKETFSSRLQRSHAKVAQIGADDYPSSGRNTPVHDLGFPDFPSFQEAVAPPPPPPDLPLLAPPLPDVPLLPPPAFPDFEKPRLPVPVWPSLPEYPPFPFVDQSAPYQGFAPRFDESANWMPSTPSIPQVFPCLRFKSNLLRVEFWVSSGTAVKGKDRFCNRPSKLDPNPVDLKTVRLPSKFRLKKLLCRVESSEVCFGDGNEKDTNPSEIDLDSLPFDLKMVILTRLSAKSLTNFKRVSKMWSSIIGSQRFIDSFFTMSSKQSRCPKFPVNTRFVGYDPIDDQQKALSVSVPSRKRNLEHKVLTLGGGGQGWRHIEVTNAPFSPVTVGVSIDGFVYYGAYSPTPPMNPVLVCFDVRSEKISFIKAPNDVLQWGFDLWILEDVERHEWSKQTCVFPSSVAWDYVGDIQMSFPGTNKAGIGDDEEFRRCSGFVDEGECHVRIAPQHVESIARFKDPIMSRILM.

One can recognise an F-box domain in the interval Glu-230–Ser-280.

The sequence is that of Probable F-box protein At1g30780 from Arabidopsis thaliana (Mouse-ear cress).